A 23-amino-acid chain; its full sequence is NADP phosphatase 2 (23 aa).

As to quaternary structure, homodimer.

The protein resides in the cytoplasm. The sequence is that of NADP phosphatase 2 from Arthrobacter sp. (strain KM).